The sequence spans 334 residues: N-acetyl-gamma-glutamyl-phosphate reductase (334 aa).

Cys-154 is a catalytic residue.

The protein belongs to the NAGSA dehydrogenase family. Type 1 subfamily.

Its subcellular location is the cytoplasm. The catalysed reaction is N-acetyl-L-glutamate 5-semialdehyde + phosphate + NADP(+) = N-acetyl-L-glutamyl 5-phosphate + NADPH + H(+). Its pathway is amino-acid biosynthesis; L-arginine biosynthesis; N(2)-acetyl-L-ornithine from L-glutamate: step 3/4. Functionally, catalyzes the NADPH-dependent reduction of N-acetyl-5-glutamyl phosphate to yield N-acetyl-L-glutamate 5-semialdehyde. This chain is N-acetyl-gamma-glutamyl-phosphate reductase, found in Salmonella typhi.